The chain runs to 442 residues: Pyruvate dehydrogenase complex protein X component, mitochondrial (442 aa).

Residues methionine 1 to leucine 35 constitute a mitochondrion transit peptide. A Lipoyl-binding domain is found at alanine 37–alanine 113. The residue at position 78 (lysine 78) is an N6-lipoyllysine. Residues isoleucine 119 to valine 169 are disordered. Residues alanine 139 to proline 151 are compositionally biased toward pro residues. Over residues glutamine 152 to valine 169 the composition is skewed to low complexity. One can recognise a Peripheral subunit-binding (PSBD) domain in the interval proline 175–leucine 215. The segment at alanine 244–proline 269 is disordered. A compositionally biased stretch (basic and acidic residues) spans lysine 245–alanine 257. An interaction to the E2 core region spans residues proline 317–leucine 336.

The protein belongs to the 2-oxoacid dehydrogenase family. In terms of assembly, eukaryotic pyruvate dehydrogenase (PDH) complexes are organized as a core consisting of the oligomeric dihydrolipoamide acetyl-transferase (E2), around which are arranged multiple copies of pyruvate dehydrogenase (E1), dihydrolipoamide dehydrogenase (E3) and protein X (E3BP) bound by non-covalent bonds. The Chaetomium thermophilum PDH complex contains 60 E2 units, 12 E3BP units, about 20 E1 units, and 12 or more E3 units. The units are organized in 1 E2 60-mer, 4 E3BP trimers, about 20 E1 tetramers, and a maximum of 12 E3 dimers. The E3BP trimers are bound inside the icosahedral core with tetrahedral symmetry.

It localises to the mitochondrion. Functionally, the 10-megadalton pyruvate dehydrogenase complex contains multiple copies of three enzymatic components: pyruvate dehydrogenase (E1), dihydrolipoamide acetyltransferase (E2) and lipoamide dehydrogenase (E3) and catalyzes the overall oxidative decarboxylation of pyruvate to form acetyl-CoA and CO(2). E3BP is responsible for tethering E3 in proximity to the core, forming the entire metabolon, and the number of E3s is limited by the number of E3BPs. Within the complex, pyruvate and thiamine pyrophosphate (TPP or vitamin B1) are bound by pyruvate dehydrogenase E1 subunits alpha and beta and pyruvate is decarboxylated leading to the 2-carbon hydrohyethyl bound to TPP. The E2 component contains covalently-bound lipoyl cofactors and transfers the hydroxyethyl group from TPP to an oxidized form of covalently bound lipoamide, and the resulting acetyl group is then transferred to free coenzyme A to form acetyl-CoA and reduced dihydrolipoamide-E2. Finally, the flavoprotein dihydrolipoamide dehydrogenase (E3) re-oxidizes the lipoyl group of dihydrolipoamide-E2 to form lipoamide-E2 and NADH. A fourth subunit, E3BP, is responsible for tethering E3 in proximity to the core, forming the entire metabolon. This is Pyruvate dehydrogenase complex protein X component, mitochondrial from Chaetomium thermophilum (strain DSM 1495 / CBS 144.50 / IMI 039719) (Thermochaetoides thermophila).